A 1242-amino-acid polypeptide reads, in one-letter code: von Willebrand factor A domain-containing protein 5B2 (1242 aa).

Positions 1–138 constitute a VIT domain; sequence MPGLYCPSSW…TMTVTLHSSR (138 aa). Residues 354–527 enclose the VWFA domain; sequence ELLFLLDSSS…KALEPALSDI (174 aa). Disordered regions lie at residues 569 to 650, 670 to 726, 751 to 794, 957 to 976, 987 to 1055, and 1118 to 1159; these read SRPP…SDTA, CSAS…CPLP, LAGR…GQGL, CSSE…SHLD, KGLQ…GSDH, and QGDS…GLGG. Over residues 588–604 the composition is skewed to low complexity; that stretch reads PSPEEAPSAASPGTEPT. Residues 605 to 619 are compositionally biased toward polar residues; the sequence is GTSEPLGTGTVSAEL. A compositionally biased stretch (low complexity) spans 681-700; it reads TGSSESPGSQGPGSPEGSAP. Positions 1125–1138 are enriched in low complexity; sequence SCSPSPSSGSEGPG.

The chain is von Willebrand factor A domain-containing protein 5B2 (VWA5B2) from Homo sapiens (Human).